Reading from the N-terminus, the 305-residue chain is GMP synthase [glutamine-hydrolyzing] subunit B (305 aa).

The 183-residue stretch at valine 2 to arginine 184 folds into the GMPS ATP-PPase domain. An ATP-binding site is contributed by serine 29–serine 35.

In terms of assembly, heterodimer composed of a glutamine amidotransferase subunit (A) and a GMP-binding subunit (B).

It carries out the reaction XMP + L-glutamine + ATP + H2O = GMP + L-glutamate + AMP + diphosphate + 2 H(+). The protein operates within purine metabolism; GMP biosynthesis; GMP from XMP (L-Gln route): step 1/1. In terms of biological role, catalyzes the synthesis of GMP from XMP. This chain is GMP synthase [glutamine-hydrolyzing] subunit B (guaAB), found in Methanosarcina acetivorans (strain ATCC 35395 / DSM 2834 / JCM 12185 / C2A).